A 586-amino-acid polypeptide reads, in one-letter code: Maltogenic alpha-amylase (586 aa).

Asparagine 147, asparagine 152, aspartate 153, glycine 172, and aspartate 174 together coordinate Ca(2+). Substrate contacts are provided by histidine 247 and arginine 326. Aspartate 328 (nucleophile) is an active-site residue. Glutamate 357 acts as the Proton donor in catalysis. Residues 423-424 (HD), aspartate 468, and arginine 472 each bind substrate.

This sequence belongs to the glycosyl hydrolase 13 family. It depends on Ca(2+) as a cofactor.

It catalyses the reaction hydrolysis of (1-&gt;4)-alpha-D-glucosidic linkages in polysaccharides so as to remove successive alpha-maltose residues from the non-reducing ends of the chains.. In terms of biological role, converts starch into maltose. This is Maltogenic alpha-amylase from Bacillus acidopullulyticus.